We begin with the raw amino-acid sequence, 283 residues long: BTB/POZ domain-containing protein KCTD15 (283 aa).

Residues 1 to 33 form a disordered region; the sequence is MPHRKERPSGSSLHAHGSTGTAEGGSMSRLSLT. Phosphoserine is present on residues serine 31, serine 35, and serine 38. Residues 56-126 enclose the BTB domain; it reads APVHIDVGGH…LRTSKLLLPD (71 aa).

As to quaternary structure, forms oligomers, predominantly homopentamers. Interacts with KCTD1, probably forming heteropentamers depending on its abundance in a cell-type dependent manner. Interacts with TFAP2A; this interaction inhibits TFAP2A transcriptional activation.

It is found in the nucleus. During embryonic development, interferes with neural crest formation. Inhibits AP2 transcriptional activity by interaction with its activation domain. The sequence is that of BTB/POZ domain-containing protein KCTD15 (KCTD15) from Bos taurus (Bovine).